The sequence spans 612 residues: Glutamine--fructose-6-phosphate aminotransferase [isomerizing] (612 aa).

Cys-2 (nucleophile; for GATase activity) is an active-site residue. In terms of domain architecture, Glutamine amidotransferase type-2 spans 2–221; it reads CGIVGIVSQR…NGDIAEITNS (220 aa). SIS domains lie at 289–429 and 461–602; these read FNKT…IRKI and LVKN…VDHP. The active-site For Fru-6P isomerization activity is the Lys-607.

As to quaternary structure, homodimer.

The protein localises to the cytoplasm. It carries out the reaction D-fructose 6-phosphate + L-glutamine = D-glucosamine 6-phosphate + L-glutamate. Its function is as follows. Catalyzes the first step in hexosamine metabolism, converting fructose-6P into glucosamine-6P using glutamine as a nitrogen source. This is Glutamine--fructose-6-phosphate aminotransferase [isomerizing] from Wigglesworthia glossinidia brevipalpis.